The chain runs to 296 residues: Probable endonuclease 4 (296 aa).

The Zn(2+) site is built by histidine 68, histidine 109, glutamate 144, aspartate 178, histidine 181, histidine 213, aspartate 226, histidine 228, and glutamate 258.

It belongs to the AP endonuclease 2 family. Zn(2+) serves as cofactor.

The catalysed reaction is Endonucleolytic cleavage to 5'-phosphooligonucleotide end-products.. Endonuclease IV plays a role in DNA repair. It cleaves phosphodiester bonds at apurinic or apyrimidinic (AP) sites, generating a 3'-hydroxyl group and a 5'-terminal sugar phosphate. The chain is Probable endonuclease 4 from Staphylococcus aureus (strain MRSA252).